Reading from the N-terminus, the 220-residue chain is Homeobox-leucine zipper protein ATHB-21 (220 aa).

The disordered stretch occupies residues 26–48 (VPQQGGEAKPTRRRKRKSKSVVV). The segment at residues 58–117 (GWFRKRKLSDEQVRMLEISFEDDHKLESERKDRLASELGLDPRQVAVWFQNRRARWKNKR) is a DNA-binding region (homeobox). The segment at 118–146 (VEDEYTKLKNAYETTVVEKCRLDSEVIHL) is leucine-zipper.

Belongs to the HD-ZIP homeobox family. Class I subfamily. As to expression, widely expressed.

The protein resides in the nucleus. Functionally, probable transcription factor. In Arabidopsis thaliana (Mouse-ear cress), this protein is Homeobox-leucine zipper protein ATHB-21 (ATHB-21).